The sequence spans 328 residues: Tryptophan--tRNA ligase (328 aa).

ATP-binding positions include 10-12 (QAT) and 18-19 (GN). Positions 11–19 (ATGSLHLGN) match the 'HIGH' region motif. Position 134 (Asp-134) interacts with L-tryptophan. ATP contacts are provided by residues 146 to 148 (GED), Ile-186, and 195 to 199 (KMSKS). The short motif at 195-199 (KMSKS) is the 'KMSKS' region element.

The protein belongs to the class-I aminoacyl-tRNA synthetase family. As to quaternary structure, homodimer.

Its subcellular location is the cytoplasm. It carries out the reaction tRNA(Trp) + L-tryptophan + ATP = L-tryptophyl-tRNA(Trp) + AMP + diphosphate + H(+). In terms of biological role, catalyzes the attachment of tryptophan to tRNA(Trp). The polypeptide is Tryptophan--tRNA ligase (Rickettsia bellii (strain RML369-C)).